The sequence spans 216 residues: Octanoyltransferase (216 aa).

Residues 32-207 form the BPL/LPL catalytic domain; sequence PDSQDEIWLV…QLVKHLDYAE (176 aa). Substrate-binding positions include 71–78, 138–140, and 151–153; these read RGGQVTYH, SLG, and GLA. The Acyl-thioester intermediate role is filled by Cys169.

Belongs to the LipB family.

It localises to the cytoplasm. The enzyme catalyses octanoyl-[ACP] + L-lysyl-[protein] = N(6)-octanoyl-L-lysyl-[protein] + holo-[ACP] + H(+). Its pathway is protein modification; protein lipoylation via endogenous pathway; protein N(6)-(lipoyl)lysine from octanoyl-[acyl-carrier-protein]: step 1/2. Functionally, catalyzes the transfer of endogenously produced octanoic acid from octanoyl-acyl-carrier-protein onto the lipoyl domains of lipoate-dependent enzymes. Lipoyl-ACP can also act as a substrate although octanoyl-ACP is likely to be the physiological substrate. The polypeptide is Octanoyltransferase (Pseudomonas putida (strain ATCC 47054 / DSM 6125 / CFBP 8728 / NCIMB 11950 / KT2440)).